The following is a 1383-amino-acid chain: MSTLIPTASACYSLQLPPTEKDDRLNLNVRTGSASTLYNSLIFVHGGLTIGLELLNYTIPELNEIFYNRINISASKYKTVEKYLSGELFYLSLIERNWSRVVLEELEIRPKPRLLHQICAFNNCLYLFGGLALSQENDEDPTLVPCNDLWEFDLVLKKWTLLDDGSNYELDDAVPSPRFNHKLTVISSLSFANRKDHFGLFIAGGKDKQSNEIYDNSIFDLVEKRYVGSQPFRLVATTGDDTKDKETGLNEFVSNPEHFLNVDQTRNAILSITDDADTPNRKQNKNPSNHHESIVVYGPTRQTGDCQNSLVSFKVGKREIKGGKVLRLHKNSRVAKLKQSIIPYNLRYPTAGLFGQNVVLTGFLPDEYEISIFVYNRPTGKWSRLNIFCSHEYGSHRFWGGFAWQSHHKVILIGNSMTSRTTSSVRFFSIMLTVSLPITNILVSSELSKGRSNNRTSSFVSHGEQRHHRNKSQNDSLLKAELSLESTTEDSTDSSSDKTAESVLDAPVPLANSRRQSFSSLGSDKSPTAVSFSDYVHYAAPKTTYTTIRSVFPPEAITLGRNAFNRIGDLIADIELVSCNGDRIPVSSAVLMERWGQHFISLLAKGYINAVDKFETDQALGLDENQRLRSKSSNSESSSSDIPKLKLSLSESLLSSSSGEHDKKEKMGLSSAHKPQKDVPQFRLPFQDSSESVNREEGSDCSKDRKTGGSSVSTAIDPHHVMPRKNSTSSFQSNSSSLLTSHLQDIPPQLPLPDEQIPAVPAAPVSYRSASRKNSQDHSSPRSSLIHTLTVLRNIPVSKSPRESPFSSPRPSMSGPSGGSADLFSSPFPSLKANYGKPPSNLRKKSYDMNDGTIESSLDSFSSGKSSMAKVSSVPGENPDSDESSIGFQEFNKNPISMFDNALLNFDNIDSENFRMEPSLIPRKLYIPFMTLTVKAFCEYLYTGQIGNKWLLAPTLMDNLLISKFYRVPLLYDLISEILFGVIGKKEAYIIGEARKLKARYFKLLRGANIPIDSNYEFPMDEYDGFLDTVDDGYLDITLLKKASKIHADSVAMSLKKKSVTSNNSRNASIRKEGSTTAESVLEEGEKQEEIVSKDDEDESRTGSTSEEDEVDKEYGLVYLEAKDKSLPTIGPRSKSIFDRQGLAAIEKLEEEQNDHQVHSIVEGEDHENLITLDELVASDAPSDYAIDLIFETATLVTDMKMLLRTSNLKAMTAKFRKCKADIEKEMADIEYQLTQMPSGSRNLAMKSANQLKESQLQSKSSPIIPTVSTVTPSPLPSISGVPSPRLPQQQLPEAQLPKLTKSTSSLSRIASHTSFKALRSMTDVTPMEKSTSDKSFRGKLQQTMLSRTPTNRNEDQDSSSASSIKSSSKKRGIFGLLTGLKR.

3 Kelch repeats span residues 124-179 (CLYL…SPRF), 199-246 (GLFI…KDKE), and 356-402 (QNVV…WGGF). Over residues 450 to 460 (GRSNNRTSSFV) the composition is skewed to polar residues. Disordered regions lie at residues 450-506 (GRSN…VLDA), 625-644 (NQRL…DIPK), 653-825 (LLSS…DLFS), 858-884 (LDSF…SDES), 1063-1114 (NNSR…VDKE), 1251-1289 (QLKE…RLPQ), and 1321-1369 (SMTD…KSSS). The segment covering 631–644 (KSSNSESSSSDIPK) has biased composition (low complexity). Basic and acidic residues predominate over residues 693-707 (VNREEGSDCSKDRKT). 3 stretches are compositionally biased toward low complexity: residues 726 to 758 (NSTS…EQIP), 803 to 815 (ESPF…SMSG), and 858 to 874 (LDSF…VSSV). Over residues 1084–1094 (EGEKQEEIVSK) the composition is skewed to basic and acidic residues. Residues 1251–1280 (QLKESQLQSKSSPIIPTVSTVTPSPLPSIS) are compositionally biased toward low complexity. Residues 1341–1352 (LQQTMLSRTPTN) are compositionally biased toward polar residues.

In terms of assembly, interacts with SIT4.

Its subcellular location is the cytoplasm. Functionally, negatively regulates early sporulation-specific genes. TOR signaling pathway component that contributes to morphogenesis as a regulator of this key morphogenetic pathway. Required for growth and hyphal formation at pH 9, for full virulence in a mouse model of systemic infection and for biofilm formation. Involved in chlamydospore formation, distinctive morphological feature of the fungal pathogen C.albicans that can be induced to form in oxygen-limited environments and has been reported in clinical specimens. This chain is Negative regulator of sporulation MDS3 (MDS3), found in Candida albicans (strain SC5314 / ATCC MYA-2876) (Yeast).